The following is a 720-amino-acid chain: NAD(P)H-quinone oxidoreductase subunit 5, chloroplastic (720 aa).

16 helical membrane passes run 9–29 (WIVP…LLFF), 39–59 (IWAI…FNIL), 87–107 (FLID…GVLV), 125–145 (FAYL…PNLI), 147–167 (IYIF…FWFT), 189–209 (LLLG…EILF), 221–239 (VNLY…GPIA), 258–278 (TPIS…FLVA), 286–306 (LLPF…FLGA), 327–347 (LGYM…FHLI), 354–374 (ALLF…VGYS), 395–415 (GITF…ACFW), 434–454 (ISLV…FLTF), 530–550 (LFPL…GAPF), 590–610 (LSVV…FSLF), and 700–720 (LFGL…GAMF).

Belongs to the complex I subunit 5 family. In terms of assembly, NDH is composed of at least 16 different subunits, 5 of which are encoded in the nucleus.

The protein resides in the plastid. The protein localises to the chloroplast thylakoid membrane. The enzyme catalyses a plastoquinone + NADH + (n+1) H(+)(in) = a plastoquinol + NAD(+) + n H(+)(out). The catalysed reaction is a plastoquinone + NADPH + (n+1) H(+)(in) = a plastoquinol + NADP(+) + n H(+)(out). NDH shuttles electrons from NAD(P)H:plastoquinone, via FMN and iron-sulfur (Fe-S) centers, to quinones in the photosynthetic chain and possibly in a chloroplast respiratory chain. The immediate electron acceptor for the enzyme in this species is believed to be plastoquinone. Couples the redox reaction to proton translocation, and thus conserves the redox energy in a proton gradient. In Physcomitrium patens (Spreading-leaved earth moss), this protein is NAD(P)H-quinone oxidoreductase subunit 5, chloroplastic (ndhF).